The chain runs to 252 residues: Imidazole glycerol phosphate synthase subunit HisF (252 aa).

Residues D11 and D130 contribute to the active site.

It belongs to the HisA/HisF family. As to quaternary structure, heterodimer of HisH and HisF.

Its subcellular location is the cytoplasm. The catalysed reaction is 5-[(5-phospho-1-deoxy-D-ribulos-1-ylimino)methylamino]-1-(5-phospho-beta-D-ribosyl)imidazole-4-carboxamide + L-glutamine = D-erythro-1-(imidazol-4-yl)glycerol 3-phosphate + 5-amino-1-(5-phospho-beta-D-ribosyl)imidazole-4-carboxamide + L-glutamate + H(+). It functions in the pathway amino-acid biosynthesis; L-histidine biosynthesis; L-histidine from 5-phospho-alpha-D-ribose 1-diphosphate: step 5/9. Its function is as follows. IGPS catalyzes the conversion of PRFAR and glutamine to IGP, AICAR and glutamate. The HisF subunit catalyzes the cyclization activity that produces IGP and AICAR from PRFAR using the ammonia provided by the HisH subunit. The polypeptide is Imidazole glycerol phosphate synthase subunit HisF (Azoarcus sp. (strain BH72)).